A 306-amino-acid chain; its full sequence is MGSFQLEDFVAGWIGGVASVIVGYPLDTVKTRLQAGVGYANTFNCIRMVYKRERVFGFFKGMSFPLASIAIYNSVVFGVFSNTQRFLSKYRCGELEAGPGRSLSDLLLASMLTGVVSVGLGGPVELIKIRLQMQTQPFREASHGLKSRAVAAYQGPVHCIATIVQMEGLTGLYRGASAMLLRDIPGYCFYFIPYVFLSEWITPEACTGPSPYAAWLAGGIAGAISWGTATPMDVVKSRIQADGVYLNKYRGVVDCISQSYQQEGFKVFFRGITVNAVRGFPMSAAMFLGYELSLKALRGEHTVRSE.

Solcar repeat units follow at residues serine 3–phenylalanine 86, arginine 101–tryptophan 200, and proline 209–alanine 296. Transmembrane regions (helical) follow at residues phenylalanine 9–valine 29, glycine 61–serine 81, leucine 107–isoleucine 127, isoleucine 184–glutamate 204, tyrosine 212–methionine 232, and isoleucine 272–tyrosine 290.

The protein belongs to the mitochondrial carrier (TC 2.A.29) family.

The protein localises to the mitochondrion inner membrane. The sequence is that of Solute carrier family 25 member 48 (Slc25a48) from Mus musculus (Mouse).